The chain runs to 130 residues: Glycine cleavage system H protein (130 aa).

In terms of domain architecture, Lipoyl-binding spans 24-106 (TVTIGITDHA…YDDGWFFKVK (83 aa)). The residue at position 65 (Lys-65) is an N6-lipoyllysine.

This sequence belongs to the GcvH family. As to quaternary structure, the glycine cleavage system is composed of four proteins: P, T, L and H. The cofactor is (R)-lipoate.

In terms of biological role, the glycine cleavage system catalyzes the degradation of glycine. The H protein shuttles the methylamine group of glycine from the P protein to the T protein. The polypeptide is Glycine cleavage system H protein (Saccharophagus degradans (strain 2-40 / ATCC 43961 / DSM 17024)).